A 373-amino-acid polypeptide reads, in one-letter code: Probable ethanolamine permease EutH (373 aa).

The next 10 membrane-spanning stretches (helical) occupy residues 5-25 (EIII…KIIG), 38-58 (IMAM…APVL), 61-81 (ILSP…AMFA), 111-131 (ILGS…LGII), 143-163 (VLSG…VAGF), 166-186 (IMIF…MLGL), 197-217 (FTIF…AGAI), 236-256 (IEIV…VFVI), 307-327 (VAFA…TAGV), and 331-351 (MIFP…AVGI).

Belongs to the EutH family.

The protein resides in the cell membrane. The enzyme catalyses ethanolamine(in) = ethanolamine(out). In terms of biological role, probably involved in the diffusion of protonated ethanolamine (EA) into the cell at low pH. At low pH most EA is protonated, and this permease becomes necessary. Contributes to bacterial survival and replication in acidic macrophage vacuoles, but not to bacterial uptake by macrophages. This Listeria monocytogenes serotype 1/2a (strain 10403S) protein is Probable ethanolamine permease EutH.